Consider the following 716-residue polypeptide: Fatty acid oxidation complex subunit alpha (716 aa).

An enoyl-CoA hydratase/isomerase region spans residues 1-189 (MIYQSPTIQV…KVGAVDAVVA (189 aa)). Asp296 provides a ligand contact to substrate. A 3-hydroxyacyl-CoA dehydrogenase region spans residues 311 to 716 (KEVNNAAVLG…AANNGSYYQA (406 aa)). Residues Met324, Asp343, 400-402 (VVE), Lys407, and Ser429 each bind NAD(+). His450 (for 3-hydroxyacyl-CoA dehydrogenase activity) is an active-site residue. Residue Asn453 participates in NAD(+) binding. Residues Asn500 and Tyr660 each contribute to the substrate site.

It in the N-terminal section; belongs to the enoyl-CoA hydratase/isomerase family. In the C-terminal section; belongs to the 3-hydroxyacyl-CoA dehydrogenase family. In terms of assembly, heterotetramer of two alpha chains (FadB) and two beta chains (FadA).

It carries out the reaction a (3S)-3-hydroxyacyl-CoA + NAD(+) = a 3-oxoacyl-CoA + NADH + H(+). It catalyses the reaction a (3S)-3-hydroxyacyl-CoA = a (2E)-enoyl-CoA + H2O. The enzyme catalyses a 4-saturated-(3S)-3-hydroxyacyl-CoA = a (3E)-enoyl-CoA + H2O. The catalysed reaction is (3S)-3-hydroxybutanoyl-CoA = (3R)-3-hydroxybutanoyl-CoA. It carries out the reaction a (3Z)-enoyl-CoA = a 4-saturated (2E)-enoyl-CoA. It catalyses the reaction a (3E)-enoyl-CoA = a 4-saturated (2E)-enoyl-CoA. The protein operates within lipid metabolism; fatty acid beta-oxidation. In terms of biological role, involved in the aerobic and anaerobic degradation of long-chain fatty acids via beta-oxidation cycle. Catalyzes the formation of 3-oxoacyl-CoA from enoyl-CoA via L-3-hydroxyacyl-CoA. It can also use D-3-hydroxyacyl-CoA and cis-3-enoyl-CoA as substrate. The protein is Fatty acid oxidation complex subunit alpha of Shewanella baltica (strain OS223).